The primary structure comprises 70 residues: U2-agatoxin-Ao1q (70 aa).

The N-terminal stretch at 1–20 is a signal peptide; sequence MRSIISLLLISAMVFSMIAA. A propeptide spanning residues 21–34 is cleaved from the precursor; it reads VPEEEGLQLSEDER. Disulfide bonds link C44/C58 and C52/C68. Position 69 is a leucine amide (L69).

The protein belongs to the neurotoxin 01 (U2-agtx) family. Post-translationally, does not contain a cysteine at position 53 which disrupts the cysteine framework. As to expression, expressed by the venom gland.

The protein localises to the secreted. In terms of biological role, insect active toxin causing rapid but reversible paralysis in crickets. No activity shown in mammals. Does not show effect on mammalian voltage-gated calcium channels. The polypeptide is U2-agatoxin-Ao1q (Agelena orientalis (Funnel-web spider)).